The chain runs to 82 residues: RNA-binding protein Hfq (82 aa).

A Sm domain is found at 10-70; that stretch reads DLFLNTVRKS…ISTIMPSQPV (61 aa).

It belongs to the Hfq family. As to quaternary structure, homohexamer.

In terms of biological role, RNA chaperone that binds small regulatory RNA (sRNAs) and mRNAs to facilitate mRNA translational regulation in response to envelope stress, environmental stress and changes in metabolite concentrations. Also binds with high specificity to tRNAs. The protein is RNA-binding protein Hfq of Chelativorans sp. (strain BNC1).